The following is a 901-amino-acid chain: Protein translocase subunit SecA (901 aa).

ATP contacts are provided by residues Q87, 105–109, and D512; that span reads GEGKT. The disordered stretch occupies residues 859–901; the sequence is HQDDDSAAAAALAAQTGERKVGRNDPCPCGSGKKYKQCHGRLQ. Zn(2+) contacts are provided by C885, C887, C896, and H897. Positions 891–901 are enriched in basic residues; sequence KKYKQCHGRLQ.

It belongs to the SecA family. In terms of assembly, monomer and homodimer. Part of the essential Sec protein translocation apparatus which comprises SecA, SecYEG and auxiliary proteins SecDF-YajC and YidC. Zn(2+) is required as a cofactor.

It localises to the cell inner membrane. Its subcellular location is the cytoplasm. The catalysed reaction is ATP + H2O + cellular proteinSide 1 = ADP + phosphate + cellular proteinSide 2.. Part of the Sec protein translocase complex. Interacts with the SecYEG preprotein conducting channel. Has a central role in coupling the hydrolysis of ATP to the transfer of proteins into and across the cell membrane, serving both as a receptor for the preprotein-SecB complex and as an ATP-driven molecular motor driving the stepwise translocation of polypeptide chains across the membrane. The chain is Protein translocase subunit SecA from Escherichia coli O6:K15:H31 (strain 536 / UPEC).